The following is a 209-amino-acid chain: Orotate phosphoribosyltransferase (209 aa).

5-phospho-alpha-D-ribose 1-diphosphate is bound by residues R96, K100, H102, and E122–S130. S126 contacts orotate.

Belongs to the purine/pyrimidine phosphoribosyltransferase family. PyrE subfamily. In terms of assembly, homodimer. Mg(2+) serves as cofactor.

The catalysed reaction is orotidine 5'-phosphate + diphosphate = orotate + 5-phospho-alpha-D-ribose 1-diphosphate. It functions in the pathway pyrimidine metabolism; UMP biosynthesis via de novo pathway; UMP from orotate: step 1/2. In terms of biological role, catalyzes the transfer of a ribosyl phosphate group from 5-phosphoribose 1-diphosphate to orotate, leading to the formation of orotidine monophosphate (OMP). In Streptococcus pyogenes serotype M2 (strain MGAS10270), this protein is Orotate phosphoribosyltransferase.